We begin with the raw amino-acid sequence, 351 residues long: uncharacterized protein (351 aa).

Residues 1–61 (MNDKRKPSFQ…RDKQEVKETR (61 aa)) form a disordered region. Basic and acidic residues-rich tracts occupy residues 16 to 38 (FQER…HFND) and 44 to 61 (RNEK…KETR).

Belongs to the class IV-like SAM-binding methyltransferase superfamily. RNA methyltransferase TrmH family.

This is an uncharacterized protein from Haemophilus influenzae (strain ATCC 51907 / DSM 11121 / KW20 / Rd).